The following is a 508-amino-acid chain: NADH-quinone oxidoreductase subunit N 2 (508 aa).

The next 14 membrane-spanning stretches (helical) occupy residues 14 to 34 (SYVA…VIVL), 43 to 63 (SLVW…WYTA), 90 to 110 (FTFF…LLSA), 119 to 139 (GAHM…MFMV), 144 to 164 (LLTI…LAGI), 179 to 199 (FLTG…IYGV), 223 to 243 (GPAL…GFGF), 275 to 295 (GAAM…APFT), 298 to 318 (WALI…LVAL), 327 to 347 (MAYS…ASGL), 353 to 373 (ISSV…IFAV), 400 to 420 (AWAL…VGFL), 433 to 455 (GYLW…YYRV), and 473 to 493 (TGIS…TIFA).

This sequence belongs to the complex I subunit 2 family. In terms of assembly, NDH-1 is composed of 14 different subunits. Subunits NuoA, H, J, K, L, M, N constitute the membrane sector of the complex.

It is found in the cell membrane. The catalysed reaction is a quinone + NADH + 5 H(+)(in) = a quinol + NAD(+) + 4 H(+)(out). Its function is as follows. NDH-1 shuttles electrons from NADH, via FMN and iron-sulfur (Fe-S) centers, to quinones in the respiratory chain. The immediate electron acceptor for the enzyme in this species is believed to be a menaquinone. Couples the redox reaction to proton translocation (for every two electrons transferred, four hydrogen ions are translocated across the cytoplasmic membrane), and thus conserves the redox energy in a proton gradient. The chain is NADH-quinone oxidoreductase subunit N 2 from Symbiobacterium thermophilum (strain DSM 24528 / JCM 14929 / IAM 14863 / T).